The following is a 40-amino-acid chain: Photosystem II reaction center protein J (40 aa).

The helical transmembrane segment at Leu10–Phe30 threads the bilayer.

Belongs to the PsbJ family. As to quaternary structure, PSII is composed of 1 copy each of membrane proteins PsbA, PsbB, PsbC, PsbD, PsbE, PsbF, PsbH, PsbI, PsbJ, PsbK, PsbL, PsbM, PsbT, PsbX, PsbY, PsbZ, Psb30/Ycf12, at least 3 peripheral proteins of the oxygen-evolving complex and a large number of cofactors. It forms dimeric complexes.

It localises to the plastid membrane. One of the components of the core complex of photosystem II (PSII). PSII is a light-driven water:plastoquinone oxidoreductase that uses light energy to abstract electrons from H(2)O, generating O(2) and a proton gradient subsequently used for ATP formation. It consists of a core antenna complex that captures photons, and an electron transfer chain that converts photonic excitation into a charge separation. The polypeptide is Photosystem II reaction center protein J (Cuscuta exaltata (Tall dodder)).